Reading from the N-terminus, the 118-residue chain is uncharacterized protein (118 aa).

This is an uncharacterized protein from Bacillus subtilis (strain 168).